A 324-amino-acid chain; its full sequence is NAC domain-containing protein 21/22 (324 aa).

The region spanning L19–K171 is the NAC domain. The short motif at R120–D137 is the Bipartite nuclear localization signal element.

In terms of assembly, dimer. Interacts with SINAT5. Post-translationally, ubiquitinated. The interaction with SINAT5 mediate its proteasome-dependent degradation. In terms of tissue distribution, predominantly expressed in the root tip and in lateral root initiation sites. Also detected in expanding cotyledon, and in leaf primordia.

The protein localises to the nucleus. In terms of biological role, transcriptional activator that mediates auxin signaling to promote lateral root development. Activates the expression of two downstream auxin-responsive genes, DBP and AIR3. The polypeptide is NAC domain-containing protein 21/22 (NAC021) (Arabidopsis thaliana (Mouse-ear cress)).